Consider the following 180-residue polypeptide: Large ribosomal subunit protein uL5 (180 aa).

It belongs to the universal ribosomal protein uL5 family. Part of the 50S ribosomal subunit; part of the 5S rRNA/L5/L18/L25 subcomplex. Contacts the 5S rRNA and the P site tRNA. Forms a bridge to the 30S subunit in the 70S ribosome.

This is one of the proteins that bind and probably mediate the attachment of the 5S RNA into the large ribosomal subunit, where it forms part of the central protuberance. In the 70S ribosome it contacts protein S13 of the 30S subunit (bridge B1b), connecting the 2 subunits; this bridge is implicated in subunit movement. Contacts the P site tRNA; the 5S rRNA and some of its associated proteins might help stabilize positioning of ribosome-bound tRNAs. The polypeptide is Large ribosomal subunit protein uL5 (Polynucleobacter asymbioticus (strain DSM 18221 / CIP 109841 / QLW-P1DMWA-1) (Polynucleobacter necessarius subsp. asymbioticus)).